A 313-amino-acid chain; its full sequence is GTP cyclohydrolase 1 (313 aa).

Positions 1-10 (MAQETTRDGS) are enriched in basic and acidic residues. Residues 1–120 (MAQETTRDGS…SRGTRERLEE (120 aa)) form a disordered region. Residues 11–20 (DSPSGSVSPP) are compositionally biased toward low complexity. Basic residues predominate over residues 29 to 39 (KDKKSSKKRAH). A compositionally biased stretch (basic and acidic residues) spans 40–64 (SSGERRSSVSKPARDPSDKPEESPS). Over residues 72-102 (TSSTAAAAVPSTITEEVSPSTSVTRSPSPVI) the composition is skewed to low complexity. Positions 202, 205, and 273 each coordinate Zn(2+).

Belongs to the GTP cyclohydrolase I family. In terms of assembly, toroid-shaped homodecamer, composed of two pentamers of five dimers.

It catalyses the reaction GTP + H2O = 7,8-dihydroneopterin 3'-triphosphate + formate + H(+). It participates in cofactor biosynthesis; 7,8-dihydroneopterin triphosphate biosynthesis; 7,8-dihydroneopterin triphosphate from GTP: step 1/1. GTP shows a positive allosteric effect, and tetrahydrobiopterin inhibits the enzyme activity. Its function is as follows. GTP cyclohydrolase 1 is the first enzyme in the biosynthetic pathway leading to folic acid. This is GTP cyclohydrolase 1 (gch-1) from Neurospora crassa (strain ATCC 24698 / 74-OR23-1A / CBS 708.71 / DSM 1257 / FGSC 987).